We begin with the raw amino-acid sequence, 216 residues long: Somatotropin (216 aa).

The signal sequence occupies residues 1–26 (MAAGPRTSVLLAFALLCLPWTQEVGA). His-45 contacts Zn(2+). Cys-78 and Cys-189 are oxidised to a cystine. The residue at position 131 (Ser-131) is a Phosphoserine. Position 198 (Glu-198) interacts with Zn(2+). Cys-206 and Cys-214 are oxidised to a cystine.

The protein belongs to the somatotropin/prolactin family.

The protein localises to the secreted. Functionally, plays an important role in growth control. Its major role in stimulating body growth is to stimulate the liver and other tissues to secrete IGF1. It stimulates both the differentiation and proliferation of myoblasts. It also stimulates amino acid uptake and protein synthesis in muscle and other tissues. The polypeptide is Somatotropin (GH1) (Hippopotamus amphibius (Hippopotamus)).